We begin with the raw amino-acid sequence, 446 residues long: Probable ribosomal RNA small subunit methyltransferase B (446 aa).

S-adenosyl-L-methionine is bound by residues 260-266 (CAAPGGK), D284, D311, and D330. Catalysis depends on C383, which acts as the Nucleophile.

It belongs to the class I-like SAM-binding methyltransferase superfamily. RsmB/NOP family.

The protein resides in the cytoplasm. The enzyme catalyses cytidine(967) in 16S rRNA + S-adenosyl-L-methionine = 5-methylcytidine(967) in 16S rRNA + S-adenosyl-L-homocysteine + H(+). Specifically methylates the cytosine at position 967 (m5C967) of 16S rRNA. This Synechocystis sp. (strain ATCC 27184 / PCC 6803 / Kazusa) protein is Probable ribosomal RNA small subunit methyltransferase B.